A 347-amino-acid polypeptide reads, in one-letter code: MNPLAQPIIYSTIFAGTLITASSSHWFLTWVGLEMNMLAFIPVLTKKMNPRSTEAAIKYFLVQATASMILMMAILSNNLLSGQWTMANITNQYSSTMMLMALAMKLGMAPFHFWVPEVTQGTTLMSGLLLLTWQKLAPISIMYQIFPVVNVNILLAFSILSIMVGSWGGLNQTQLRKILAYSSITHVGWMMAVLPYNPDITIFNLIIYIVLTTTAFLALNLNSSTTTLLLSRSWNKLTWLLPLIPSTLLSLGGLPPLTGFLPKWLVIEELTKNGTLIIPTAMAIITLINLYFYMRLIYSTSITLLPTSNNVKMKWQFENTKPTFLLPTLMTLTTLLLPIAPLTFPTP.

The next 11 helical transmembrane spans lie at M1–A21, H25–T45, A55–L75, T96–P116, T123–Y143, I145–G165, I178–P198, I200–N220, L237–L257, G274–M294, and F324–F344.

This sequence belongs to the complex I subunit 2 family. Core subunit of respiratory chain NADH dehydrogenase (Complex I) which is composed of 45 different subunits. Interacts with TMEM242.

The protein resides in the mitochondrion inner membrane. The catalysed reaction is a ubiquinone + NADH + 5 H(+)(in) = a ubiquinol + NAD(+) + 4 H(+)(out). In terms of biological role, core subunit of the mitochondrial membrane respiratory chain NADH dehydrogenase (Complex I) which catalyzes electron transfer from NADH through the respiratory chain, using ubiquinone as an electron acceptor. Essential for the catalytic activity and assembly of complex I. This is NADH-ubiquinone oxidoreductase chain 2 from Hylobates lar (Lar gibbon).